Here is a 341-residue protein sequence, read N- to C-terminus: Tubulin-specific chaperone C (341 aa).

Met1 bears the N-acetylmethionine mark. Positions 34–49 (ERQIEVERRKQKRQDQ) are enriched in basic and acidic residues. The segment at 34 to 55 (ERQIEVERRKQKRQDQEVEEEK) is disordered. Ser79 is modified (phosphoserine). A disordered region spans residues 148-173 (TAQVDAAPVTSAAPSPPVTKEEEGAP). Positions 163–318 (PPVTKEEEGA…NWDQVDDFNW (156 aa)) constitute a C-CAP/cofactor C-like domain.

The protein belongs to the TBCC family. In terms of assembly, supercomplex made of cofactors A to E. Cofactors A and D function by capturing and stabilizing tubulin in a quasi-native conformation. Cofactor E binds to the cofactor D-tubulin complex; interaction with cofactor C then causes the release of tubulin polypeptides that are committed to the native state.

It is found in the cytoplasm. In terms of biological role, tubulin-folding protein; involved in the final step of the tubulin folding pathway. This Mus musculus (Mouse) protein is Tubulin-specific chaperone C (Tbcc).